The following is a 142-amino-acid chain: Mini-ribonuclease 3 (142 aa).

Aspartate 33 is an active-site residue.

The protein belongs to the MrnC RNase family. In terms of assembly, homodimer. Mg(2+) is required as a cofactor.

It is found in the cytoplasm. Functionally, involved in correct processing of both the 5' and 3' ends of 23S rRNA precursor. Processes 30S rRNA precursor transcript even in absence of ribonuclease 3 (Rnc); Rnc processes 30S rRNA into smaller rRNA precursors. This Thermoanaerobacter sp. (strain X514) protein is Mini-ribonuclease 3.